The chain runs to 387 residues: 1-deoxy-D-xylulose 5-phosphate reductoisomerase (387 aa).

5 residues coordinate NADPH: threonine 10, glycine 11, isoleucine 13, asparagine 38, and asparagine 122. Lysine 123 serves as a coordination point for 1-deoxy-D-xylulose 5-phosphate. Position 124 (glutamate 124) interacts with NADPH. A Mn(2+)-binding site is contributed by aspartate 148. Positions 149, 150, 174, and 197 each coordinate 1-deoxy-D-xylulose 5-phosphate. Glutamate 150 lines the Mn(2+) pocket. Glycine 203 contributes to the NADPH binding site. Residues serine 210, asparagine 215, lysine 216, and glutamate 219 each coordinate 1-deoxy-D-xylulose 5-phosphate. Glutamate 219 serves as a coordination point for Mn(2+).

Belongs to the DXR family. Mg(2+) is required as a cofactor. It depends on Mn(2+) as a cofactor.

It carries out the reaction 2-C-methyl-D-erythritol 4-phosphate + NADP(+) = 1-deoxy-D-xylulose 5-phosphate + NADPH + H(+). It participates in isoprenoid biosynthesis; isopentenyl diphosphate biosynthesis via DXP pathway; isopentenyl diphosphate from 1-deoxy-D-xylulose 5-phosphate: step 1/6. Functionally, catalyzes the NADPH-dependent rearrangement and reduction of 1-deoxy-D-xylulose-5-phosphate (DXP) to 2-C-methyl-D-erythritol 4-phosphate (MEP). This chain is 1-deoxy-D-xylulose 5-phosphate reductoisomerase, found in Ehrlichia ruminantium (strain Welgevonden).